Consider the following 81-residue polypeptide: uncharacterized protein (81 aa).

2 helical membrane-spanning segments follow: residues 1 to 21 (MTLF…FSLL) and 27 to 47 (IFIY…HHFF).

Its subcellular location is the membrane. This is an uncharacterized protein from Saccharomyces cerevisiae (strain ATCC 204508 / S288c) (Baker's yeast).